Here is a 646-residue protein sequence, read N- to C-terminus: EF-hand calcium-binding domain-containing protein 6 (646 aa).

6 consecutive EF-hand domains span residues 1-27, 28-63, 109-144, 214-249, 321-356, and 357-392; these read FLET…FDIP, LTPR…NYSP, DCYQ…CGCS, SSQL…FCHK, SHYH…NVQI, and LTDE…ERAA. Thr-29 carries the phosphothreonine modification. The segment at 390 to 452 is disordered; sequence RAATPTATGD…TTAIPGTPPL (63 aa). A compositionally biased stretch (polar residues) spans 432–446; the sequence is KPQSHPCTAASTTAI. Ser-435 is subject to Phosphoserine. Thr-439 and Thr-449 each carry phosphothreonine. An interaction with PARK7 region spans residues 448–646; the sequence is GTPPLQNCDP…YNDFLRAFLQ (199 aa). 4 EF-hand domains span residues 468-503, 504-539, 579-614, and 615-646; these read GCWR…FNLD, ISKE…LLKA, HCWR…YSIN, and LSEE…AFLQ. The segment at 552-646 is interaction with AR; that stretch reads NAHKMKDSGA…YNDFLRAFLQ (95 aa).

As to quaternary structure, microtubule inner protein component of sperm flagellar doublet microtubules. Binds PARK7. Part of a ternary complex containing PARK7, EFCAB6/DJBP and AR.

The protein resides in the nucleus. Its subcellular location is the cytoplasm. It localises to the cytoskeleton. It is found in the flagellum axoneme. In terms of biological role, negatively regulates the androgen receptor by recruiting histone deacetylase complex, and protein DJ-1 antagonizes this inhibition by abrogation of this complex. Microtubule inner protein (MIP) part of the dynein-decorated doublet microtubules (DMTs) in cilia axoneme, which is required for motile cilia beating. In Macaca fascicularis (Crab-eating macaque), this protein is EF-hand calcium-binding domain-containing protein 6 (EFCAB6).